The following is a 250-amino-acid chain: Small ribosomal subunit protein uS2 (250 aa).

The protein belongs to the universal ribosomal protein uS2 family.

The chain is Small ribosomal subunit protein uS2 from Marinobacter nauticus (strain ATCC 700491 / DSM 11845 / VT8) (Marinobacter aquaeolei).